Reading from the N-terminus, the 294-residue chain is MRTEYAARLPVDWRDYVELCKPRVVLLMLLTVIVGMYLAAPGWVSLRLIAFTLLGIGLCAGSAAAINHLVDRHIDSIMARTKKRPVAYGRVSVKQALWFAVIIGLMGLSLLILFVNQLTALLTFVTLIGYAGVYTGYLKRATSQNIVIGGLAGAAPPLLGWTAVTDQLDPQALLLVLIIFTWTPPHFWALAIYRYKEYQDAEIPMLPVTHGIQFTKLNIYLYTVLLLVVSLLPFVVSMSGWIYLLGALVLGIRFLVWAHKLYFTDKPVVAMQTFRFSILYLMLLFVFLLVDHYF.

The next 9 membrane-spanning stretches (helical) occupy residues 24–44 (VVLL…PGWV), 48–68 (LIAF…AINH), 96–116 (ALWF…LFVN), 118–138 (LTAL…TGYL), 145–165 (NIVI…TAVT), 172–192 (ALLL…ALAI), 224–244 (VLLL…WIYL), 245–265 (LGAL…YFTD), and 268–288 (VVAM…FVFL).

This sequence belongs to the UbiA prenyltransferase family. Protoheme IX farnesyltransferase subfamily.

It is found in the cell inner membrane. It carries out the reaction heme b + (2E,6E)-farnesyl diphosphate + H2O = Fe(II)-heme o + diphosphate. It participates in porphyrin-containing compound metabolism; heme O biosynthesis; heme O from protoheme: step 1/1. Converts heme B (protoheme IX) to heme O by substitution of the vinyl group on carbon 2 of heme B porphyrin ring with a hydroxyethyl farnesyl side group. This Legionella pneumophila (strain Corby) protein is Protoheme IX farnesyltransferase.